A 54-amino-acid polypeptide reads, in one-letter code: Ribulose bisphosphate carboxylase large chain (54 aa).

A propeptide spanning residues 1 to 2 is cleaved from the precursor; sequence MS. Proline 3 carries the N-acetylproline modification. Lysine 14 carries the N6,N6,N6-trimethyllysine modification.

It belongs to the RuBisCO large chain family. Type I subfamily. Heterohexadecamer of 8 large chains and 8 small chains.

It is found in the plastid. Its subcellular location is the chloroplast. It carries out the reaction 2 (2R)-3-phosphoglycerate + 2 H(+) = D-ribulose 1,5-bisphosphate + CO2 + H2O. The enzyme catalyses D-ribulose 1,5-bisphosphate + O2 = 2-phosphoglycolate + (2R)-3-phosphoglycerate + 2 H(+). Its function is as follows. RuBisCO catalyzes two reactions: the carboxylation of D-ribulose 1,5-bisphosphate, the primary event in carbon dioxide fixation, as well as the oxidative fragmentation of the pentose substrate in the photorespiration process. Both reactions occur simultaneously and in competition at the same active site. This is Ribulose bisphosphate carboxylase large chain (rbcL) from Colletia hystrix (Crucifixion thorn).